We begin with the raw amino-acid sequence, 131 residues long: Cuticle protein 79, isoform B (131 aa).

Tandem repeats lie at residues 37–40 (AAPA), 45–48 (AAPA), and 53–56 (AAPA).

Functionally, component of the cuticle of migratory locust which contains more than 100 different structural proteins. The chain is Cuticle protein 79, isoform B from Locusta migratoria (Migratory locust).